A 654-amino-acid polypeptide reads, in one-letter code: tRNA 5-methylaminomethyl-2-thiouridine biosynthesis bifunctional protein MnmC (654 aa).

The tRNA (mnm(5)s(2)U34)-methyltransferase stretch occupies residues 1–236 (MSTLLQHAQI…KWEVMHGVYT (236 aa)). Residues 262–654 (IGAGLAGSAT…FALRRLIRGK (393 aa)) are FAD-dependent cmnm(5)s(2)U34 oxidoreductase.

This sequence in the N-terminal section; belongs to the methyltransferase superfamily. tRNA (mnm(5)s(2)U34)-methyltransferase family. The protein in the C-terminal section; belongs to the DAO family. FAD serves as cofactor.

The protein resides in the cytoplasm. The catalysed reaction is 5-aminomethyl-2-thiouridine(34) in tRNA + S-adenosyl-L-methionine = 5-methylaminomethyl-2-thiouridine(34) in tRNA + S-adenosyl-L-homocysteine + H(+). Catalyzes the last two steps in the biosynthesis of 5-methylaminomethyl-2-thiouridine (mnm(5)s(2)U) at the wobble position (U34) in tRNA. Catalyzes the FAD-dependent demodification of cmnm(5)s(2)U34 to nm(5)s(2)U34, followed by the transfer of a methyl group from S-adenosyl-L-methionine to nm(5)s(2)U34, to form mnm(5)s(2)U34. This is tRNA 5-methylaminomethyl-2-thiouridine biosynthesis bifunctional protein MnmC from Pseudomonas entomophila (strain L48).